A 201-amino-acid polypeptide reads, in one-letter code: Holliday junction resolvase RecU (201 aa).

4 residues coordinate Mg(2+): Thr-87, Asp-89, Asp-102, and Gln-121.

It belongs to the RecU family. Mg(2+) serves as cofactor.

It localises to the cytoplasm. The catalysed reaction is Endonucleolytic cleavage at a junction such as a reciprocal single-stranded crossover between two homologous DNA duplexes (Holliday junction).. Its function is as follows. Endonuclease that resolves Holliday junction intermediates in genetic recombination. Cleaves mobile four-strand junctions by introducing symmetrical nicks in paired strands. Promotes annealing of linear ssDNA with homologous dsDNA. Required for DNA repair, homologous recombination and chromosome segregation. This is Holliday junction resolvase RecU from Levilactobacillus brevis (strain ATCC 367 / BCRC 12310 / CIP 105137 / JCM 1170 / LMG 11437 / NCIMB 947 / NCTC 947) (Lactobacillus brevis).